The sequence spans 459 residues: Vanillin aminotransferase (459 aa).

Pyridoxal 5'-phosphate is bound by residues Gly-115 to Ser-116 and Asp-255. Lys-284 bears the N6-(pyridoxal phosphate)lysine mark. Phe-320–Thr-321 lines the pyridoxal 5'-phosphate pocket. The stretch at Leu-428–Lys-459 forms a coiled coil.

This sequence belongs to the class-III pyridoxal-phosphate-dependent aminotransferase family. Expressed in placental tissue of immature fruit.

The catalysed reaction is vanillin + L-alanine = vanillylamine + pyruvate. Its function is as follows. Involved in the biosynthesis of capsaicinoids natural products, pungent alkaloids synthesized from phenylpropanoid intermediates in the placental tissue of chili pepper fruit acting as repellant on herbivorous mammals and conferring spiciness to hot peppers. Can transfer an amine from alanine to vanillin, forming vanillylamine and pyruvate. The sequence is that of Vanillin aminotransferase from Capsicum frutescens (Cayenne pepper).